The sequence spans 846 residues: Inactive cap-specific mRNA (nucleoside-2'-O-)-methyltransferase 1B (846 aa).

The segment at 30-50 (DDEDDFVDDPSPTEQKTKAEK) is disordered. Positions 44 to 90 (QKTKAEKKMERMGYKAGEGLGKNKQGIQEPIAISFREGKAGLGHEQW) constitute a G-patch domain. The RrmJ-type SAM-dependent 2'-O-MTase domain maps to 184–413 (FFLNRSAMKT…ERFVVCKGLR (230 aa)).

This is Inactive cap-specific mRNA (nucleoside-2'-O-)-methyltransferase 1B from Caenorhabditis briggsae.